The primary structure comprises 389 residues: Alanine racemase (389 aa).

Lys48 acts as the Proton acceptor; specific for D-alanine in catalysis. Lys48 is subject to N6-(pyridoxal phosphate)lysine. Residue Arg144 coordinates substrate. The active-site Proton acceptor; specific for L-alanine is Tyr281. Met329 is a substrate binding site.

The protein belongs to the alanine racemase family. The cofactor is pyridoxal 5'-phosphate.

The enzyme catalyses L-alanine = D-alanine. Its pathway is amino-acid biosynthesis; D-alanine biosynthesis; D-alanine from L-alanine: step 1/1. Functionally, catalyzes the interconversion of L-alanine and D-alanine. May also act on other amino acids. In Leptospira interrogans serogroup Icterohaemorrhagiae serovar copenhageni (strain Fiocruz L1-130), this protein is Alanine racemase (alr).